We begin with the raw amino-acid sequence, 544 residues long: Membrane protein insertase YidC (544 aa).

The helical transmembrane segment at 6 to 26 (NILLIGLLFVSFLLWQQWQAD) threads the bilayer. Residues 34–58 (AAQTQSSIPASTVADSHSSDVPDAD) are disordered. Residues 39–49 (SSIPASTVADS) show a composition bias toward polar residues. A run of 4 helical transmembrane segments spans residues 345 to 365 (LLMF…LITL), 423 to 443 (GGCL…WVLL), 460 to 480 (LSVQ…MFVM), and 503 to 523 (VIFT…WLVG).

It belongs to the OXA1/ALB3/YidC family. Type 1 subfamily. As to quaternary structure, interacts with the Sec translocase complex via SecD. Specifically interacts with transmembrane segments of nascent integral membrane proteins during membrane integration.

The protein resides in the cell inner membrane. Functionally, required for the insertion and/or proper folding and/or complex formation of integral membrane proteins into the membrane. Involved in integration of membrane proteins that insert both dependently and independently of the Sec translocase complex, as well as at least some lipoproteins. Aids folding of multispanning membrane proteins. The polypeptide is Membrane protein insertase YidC (Shewanella halifaxensis (strain HAW-EB4)).